A 366-amino-acid chain; its full sequence is uncharacterized protein (366 aa).

Residues 199–267 (QKKQIEDEEK…QLKDAQAKRD (69 aa)) are disordered.

This is an uncharacterized protein from Haemophilus influenzae (strain ATCC 51907 / DSM 11121 / KW20 / Rd).